The following is a 116-amino-acid chain: Large ribosomal subunit protein bL19 (116 aa).

The protein belongs to the bacterial ribosomal protein bL19 family.

Its function is as follows. This protein is located at the 30S-50S ribosomal subunit interface and may play a role in the structure and function of the aminoacyl-tRNA binding site. In Geobacillus stearothermophilus (Bacillus stearothermophilus), this protein is Large ribosomal subunit protein bL19 (rplS).